Reading from the N-terminus, the 536-residue chain is Phosphoenolpyruvate carboxykinase (ATP) (536 aa).

The substrate site is built by Arg-61, Tyr-195, and Lys-201. ATP is bound by residues Lys-201, His-220, and 236-244 (GLSGTGKTT). Mn(2+) contacts are provided by Lys-201 and His-220. A Mn(2+)-binding site is contributed by Asp-257. Positions 285, 322, and 447 each coordinate ATP. Arg-322 provides a ligand contact to substrate.

The protein belongs to the phosphoenolpyruvate carboxykinase (ATP) family. The cofactor is Mn(2+).

The protein localises to the cytoplasm. It carries out the reaction oxaloacetate + ATP = phosphoenolpyruvate + ADP + CO2. It functions in the pathway carbohydrate biosynthesis; gluconeogenesis. Functionally, involved in the gluconeogenesis. Catalyzes the conversion of oxaloacetate (OAA) to phosphoenolpyruvate (PEP) through direct phosphoryl transfer between the nucleoside triphosphate and OAA. The chain is Phosphoenolpyruvate carboxykinase (ATP) from Allorhizobium ampelinum (strain ATCC BAA-846 / DSM 112012 / S4) (Agrobacterium vitis (strain S4)).